A 288-amino-acid chain; its full sequence is Diaminopimelate epimerase (288 aa).

Substrate contacts are provided by Asn14 and Asn67. Catalysis depends on Cys76, which acts as the Proton donor. Substrate-binding positions include 77–78 (GN), Asn166, Asn199, and 217–218 (ER). Cys226 functions as the Proton acceptor in the catalytic mechanism. 227–228 (GT) contacts substrate.

The protein belongs to the diaminopimelate epimerase family. As to quaternary structure, homodimer.

The protein localises to the cytoplasm. It carries out the reaction (2S,6S)-2,6-diaminopimelate = meso-2,6-diaminopimelate. Its pathway is amino-acid biosynthesis; L-lysine biosynthesis via DAP pathway; DL-2,6-diaminopimelate from LL-2,6-diaminopimelate: step 1/1. In terms of biological role, catalyzes the stereoinversion of LL-2,6-diaminopimelate (L,L-DAP) to meso-diaminopimelate (meso-DAP), a precursor of L-lysine and an essential component of the bacterial peptidoglycan. The chain is Diaminopimelate epimerase from Bacillus anthracis (strain A0248).